The following is a 273-amino-acid chain: Putative inactive beta-glucuronidase protein GUSBP11 (273 aa).

Residues 1–20 (MTAAETGRGKPRLGGGSGLG) form a disordered region.

This sequence belongs to the glycosyl hydrolase 2 family.

The sequence is that of Putative inactive beta-glucuronidase protein GUSBP11 (GUSBP11) from Homo sapiens (Human).